The sequence spans 235 residues: 2-C-methyl-D-erythritol 4-phosphate cytidylyltransferase (235 aa).

The protein belongs to the IspD/TarI cytidylyltransferase family. IspD subfamily. As to quaternary structure, homodimer.

The catalysed reaction is 2-C-methyl-D-erythritol 4-phosphate + CTP + H(+) = 4-CDP-2-C-methyl-D-erythritol + diphosphate. The protein operates within isoprenoid biosynthesis; isopentenyl diphosphate biosynthesis via DXP pathway; isopentenyl diphosphate from 1-deoxy-D-xylulose 5-phosphate: step 2/6. Its function is as follows. Catalyzes the formation of 4-diphosphocytidyl-2-C-methyl-D-erythritol from CTP and 2-C-methyl-D-erythritol 4-phosphate (MEP). The protein is 2-C-methyl-D-erythritol 4-phosphate cytidylyltransferase of Blochmanniella pennsylvanica (strain BPEN).